The primary structure comprises 298 residues: tRNA-uridine aminocarboxypropyltransferase 2 (298 aa).

An N-acetylmethionine modification is found at Met1. The segment at 1-52 (MESQKEARILQEPVARPPGASRSQTPNAKERQEGGPVPAAAALGAEADDDSA) is disordered. Ser132 is subject to Phosphoserine. The DXTW motif lies at 178–181 (DGTW).

The protein belongs to the TDD superfamily. DTWD2 family.

It is found in the nucleus. It localises to the cytoplasm. It catalyses the reaction a uridine in tRNA + S-adenosyl-L-methionine = a 3-[(3S)-3-amino-3-carboxypropyl]uridine in tRNA + S-methyl-5'-thioadenosine + H(+). In terms of biological role, catalyzes the formation of 3-(3-amino-3-carboxypropyl)uridine (acp3U) at position 20a in the D-loop of several cytoplasmic tRNAs (acp3U(20a)). Also has a weak activity to form acp3U at position 20 in the D-loop of tRNAs (acp3U(20)). Involved in glycoRNA biosynthesis by mediating formation of acp3U, which acts as an attachment site for N-glycans on tRNAs. GlycoRNAs consist of RNAs modified with secretory N-glycans that are presented on the cell surface. This chain is tRNA-uridine aminocarboxypropyltransferase 2, found in Macaca fascicularis (Crab-eating macaque).